The sequence spans 172 residues: 3-hydroxydecanoyl-[acyl-carrier-protein] dehydratase (172 aa).

Histidine 71 is a catalytic residue.

The protein belongs to the thioester dehydratase family. FabA subfamily. Homodimer.

It is found in the cytoplasm. The catalysed reaction is a (3R)-hydroxyacyl-[ACP] = a (2E)-enoyl-[ACP] + H2O. It carries out the reaction (3R)-hydroxydecanoyl-[ACP] = (2E)-decenoyl-[ACP] + H2O. The enzyme catalyses (2E)-decenoyl-[ACP] = (3Z)-decenoyl-[ACP]. Its pathway is lipid metabolism; fatty acid biosynthesis. Functionally, necessary for the introduction of cis unsaturation into fatty acids. Catalyzes the dehydration of (3R)-3-hydroxydecanoyl-ACP to E-(2)-decenoyl-ACP and then its isomerization to Z-(3)-decenoyl-ACP. Can catalyze the dehydratase reaction for beta-hydroxyacyl-ACPs with saturated chain lengths up to 16:0, being most active on intermediate chain length. This Pectobacterium carotovorum subsp. carotovorum (strain PC1) protein is 3-hydroxydecanoyl-[acyl-carrier-protein] dehydratase.